Consider the following 226-residue polypeptide: Cysteine and histidine-rich domain-containing protein RAR1 (226 aa).

8 residues coordinate Zn(2+): C12, C17, C31, H34, C49, C50, C66, and H71. A CHORD 1 domain is found at 12–71; the sequence is CQRIGCNAMFTDDDNPQGSCQFHASGPFFHDGMKEWSCCKQRSHDFSLFLEIPGCKTGKH. Positions 104–124 match the CCCH motif; the sequence is CSRCRQGFFCSDHGSQPKEQI. Zn(2+) contacts are provided by C159, C164, C178, H181, C196, C197, C213, and H218. A CHORD 2 domain is found at 159 to 218; that stretch reads CKNKGCGQTFKERDNHETACSHHPGPAVFHDRLRGWKCCDVHVKEFDEFMEIPPCTKGWH.

In terms of assembly, interacts with HSP90-1, HSP90-2, SGT1A and SGT1B. Forms a ternary complex with SGT1A and barley HSP90.

Its function is as follows. Required specifically for plant innate immunity. Is essential for resistance conferred by multiple R genes recognizing different bacterial and oomycete pathogen isolates like avirulent P.syringae or H.parasitica (downy mildew). Contributes additively with SGT1B to RPP5-dependent resistance. Functions as a positive regulator of RPS5 accumulation by assisting its stabilization. May function as co-chaperone of HSP90-2 to positively regulate the steady-state accumulation of RPM1 and protect it from SGT1-mediated degradation. Acts as a negative regulator of pathogen-associated molecular pattern (PAMP)-triggered immunity. This is Cysteine and histidine-rich domain-containing protein RAR1 (RAR1) from Arabidopsis thaliana (Mouse-ear cress).